The following is a 92-amino-acid chain: Acylphosphatase (92 aa).

In terms of domain architecture, Acylphosphatase-like spans 5 to 92 (ATAAYVYGVV…TDYKGFTIRY (88 aa)). Catalysis depends on residues Arg20 and Asn38.

It belongs to the acylphosphatase family.

It carries out the reaction an acyl phosphate + H2O = a carboxylate + phosphate + H(+). This is Acylphosphatase (acyP) from Pectobacterium atrosepticum (strain SCRI 1043 / ATCC BAA-672) (Erwinia carotovora subsp. atroseptica).